We begin with the raw amino-acid sequence, 210 residues long: Protein RFS1 (210 aa).

Residues 4-203 enclose the Flavodoxin-like domain; that stretch reads VAILIYSVDD…RVHQLQGKAF (200 aa).

The protein belongs to the WrbA family.

The protein localises to the cytoplasm. It localises to the membrane raft. In Saccharomyces cerevisiae (strain ATCC 204508 / S288c) (Baker's yeast), this protein is Protein RFS1 (RFS1).